We begin with the raw amino-acid sequence, 311 residues long: Malate dehydrogenase (311 aa).

NAD(+)-binding positions include 7-13 (GAAGGIG) and aspartate 34. Substrate is bound by residues arginine 81 and arginine 87. NAD(+)-binding positions include asparagine 94 and 117–119 (ITN). Residues asparagine 119 and arginine 153 each contribute to the substrate site. The active-site Proton acceptor is histidine 177. Methionine 227 contacts NAD(+).

This sequence belongs to the LDH/MDH superfamily. MDH type 1 family. As to quaternary structure, homodimer.

It catalyses the reaction (S)-malate + NAD(+) = oxaloacetate + NADH + H(+). Functionally, catalyzes the reversible oxidation of malate to oxaloacetate. The protein is Malate dehydrogenase of Shewanella loihica (strain ATCC BAA-1088 / PV-4).